Reading from the N-terminus, the 154-residue chain is SsrA-binding protein (154 aa).

The tract at residues 134 to 154 is disordered; sequence DKREDIKKRDQERELSRRFKN.

The protein belongs to the SmpB family.

The protein resides in the cytoplasm. Its function is as follows. Required for rescue of stalled ribosomes mediated by trans-translation. Binds to transfer-messenger RNA (tmRNA), required for stable association of tmRNA with ribosomes. tmRNA and SmpB together mimic tRNA shape, replacing the anticodon stem-loop with SmpB. tmRNA is encoded by the ssrA gene; the 2 termini fold to resemble tRNA(Ala) and it encodes a 'tag peptide', a short internal open reading frame. During trans-translation Ala-aminoacylated tmRNA acts like a tRNA, entering the A-site of stalled ribosomes, displacing the stalled mRNA. The ribosome then switches to translate the ORF on the tmRNA; the nascent peptide is terminated with the 'tag peptide' encoded by the tmRNA and targeted for degradation. The ribosome is freed to recommence translation, which seems to be the essential function of trans-translation. The polypeptide is SsrA-binding protein (Leuconostoc mesenteroides subsp. mesenteroides (strain ATCC 8293 / DSM 20343 / BCRC 11652 / CCM 1803 / JCM 6124 / NCDO 523 / NBRC 100496 / NCIMB 8023 / NCTC 12954 / NRRL B-1118 / 37Y)).